A 440-amino-acid chain; its full sequence is Damage-control phosphatase ARMT1 (440 aa).

2 residues coordinate Mn(2+): Asp-252 and Asn-253. 252–253 provides a ligand contact to substrate; the sequence is DN. S-adenosyl-L-methionine contacts are provided by Glu-257 and Asp-290. Asp-290 contributes to the Mn(2+) binding site. Substrate-binding positions include 366–370 and Lys-403; that span reads DLNYR. The Subfamily III RTxK motif motif lies at 400-403; that stretch reads RTLK.

This sequence belongs to the damage-control phosphatase family. Sugar phosphate phosphatase III subfamily. Mn(2+) is required as a cofactor. Requires Ni(2+) as cofactor. Post-translationally, automethylated.

The catalysed reaction is beta-D-fructose 1-phosphate + H2O = D-fructose + phosphate. The enzyme catalyses beta-D-fructose 6-phosphate = dihydroxyacetone + D-glyceraldehyde 3-phosphate. It carries out the reaction L-glutamyl-[protein] + S-adenosyl-L-methionine = [protein]-L-glutamate 5-O-methyl ester + S-adenosyl-L-homocysteine. Functionally, metal-dependent phosphatase that shows phosphatase activity against several substrates, including fructose-1-phosphate and fructose-6-phosphate. Its preference for fructose-1-phosphate, a strong glycating agent that causes DNA damage rather than a canonical yeast metabolite, suggests a damage-control function in hexose phosphate metabolism. Has also been shown to have O-methyltransferase activity that methylates glutamate residues of target proteins to form gamma-glutamyl methyl ester residues. Possibly methylates PCNA, suggesting it is involved in the DNA damage response. The sequence is that of Damage-control phosphatase ARMT1 from Xenopus tropicalis (Western clawed frog).